The following is a 207-amino-acid chain: Uracil phosphoribosyltransferase (207 aa).

Residues R77, R102, and 129–137 contribute to the 5-phospho-alpha-D-ribose 1-diphosphate site; that span reads DPMLATGGS. Uracil-binding positions include I192 and 197–199; that span reads GDA. D198 provides a ligand contact to 5-phospho-alpha-D-ribose 1-diphosphate.

It belongs to the UPRTase family. Mg(2+) serves as cofactor.

It carries out the reaction UMP + diphosphate = 5-phospho-alpha-D-ribose 1-diphosphate + uracil. It functions in the pathway pyrimidine metabolism; UMP biosynthesis via salvage pathway; UMP from uracil: step 1/1. With respect to regulation, allosterically activated by GTP. Functionally, catalyzes the conversion of uracil and 5-phospho-alpha-D-ribose 1-diphosphate (PRPP) to UMP and diphosphate. The protein is Uracil phosphoribosyltransferase of Mycoplasma mobile (strain ATCC 43663 / 163K / NCTC 11711) (Mesomycoplasma mobile).